We begin with the raw amino-acid sequence, 203 residues long: Putative 3-methyladenine DNA glycosylase (203 aa).

The protein belongs to the DNA glycosylase MPG family.

The protein is Putative 3-methyladenine DNA glycosylase of Clostridium botulinum (strain Langeland / NCTC 10281 / Type F).